The following is a 407-amino-acid chain: Na(+)-translocating NADH-quinone reductase subunit F (407 aa).

A helical membrane pass occupies residues 6–26 (IFLAIGMFTAIVLGLVAIILV). The 2Fe-2S ferredoxin-type domain occupies 35–127 (GDVTIQINGE…DMQIRVPEEV (93 aa)). Residues Cys70, Cys76, Cys79, and Cys111 each coordinate [2Fe-2S] cluster. One can recognise an FAD-binding FR-type domain in the interval 130–269 (VKKWECTVES…YGPFGEFFAK (140 aa)).

This sequence belongs to the NqrF family. Composed of six subunits; NqrA, NqrB, NqrC, NqrD, NqrE and NqrF. Requires [2Fe-2S] cluster as cofactor. FAD is required as a cofactor.

Its subcellular location is the cell inner membrane. The enzyme catalyses a ubiquinone + n Na(+)(in) + NADH + H(+) = a ubiquinol + n Na(+)(out) + NAD(+). In terms of biological role, NQR complex catalyzes the reduction of ubiquinone-1 to ubiquinol by two successive reactions, coupled with the transport of Na(+) ions from the cytoplasm to the periplasm. The first step is catalyzed by NqrF, which accepts electrons from NADH and reduces ubiquinone-1 to ubisemiquinone by a one-electron transfer pathway. In Pseudomonas aeruginosa (strain UCBPP-PA14), this protein is Na(+)-translocating NADH-quinone reductase subunit F.